The following is a 98-amino-acid chain: Phosphoribosyl-ATP pyrophosphatase (98 aa).

Belongs to the PRA-PH family.

The protein localises to the cytoplasm. It carries out the reaction 1-(5-phospho-beta-D-ribosyl)-ATP + H2O = 1-(5-phospho-beta-D-ribosyl)-5'-AMP + diphosphate + H(+). It participates in amino-acid biosynthesis; L-histidine biosynthesis; L-histidine from 5-phospho-alpha-D-ribose 1-diphosphate: step 2/9. This chain is Phosphoribosyl-ATP pyrophosphatase, found in Pelotomaculum thermopropionicum (strain DSM 13744 / JCM 10971 / SI).